Reading from the N-terminus, the 220-residue chain is Histone deacetylase complex subunit SAP30 (220 aa).

The interval 1-129 (MNGFTPDEMS…QSVRNRRKRK (129 aa)) is interaction with NCOR1. Phosphothreonine is present on T5. Residues 67-115 (CCLREDGERCGRAAGNASFSKRIQKSISQKKVKIELDKSARHLYICDYH) form an Atypical zinc finger. A Glycyl lysine isopeptide (Lys-Gly) (interchain with G-Cter in SUMO2) cross-link involves residue K87. Positions 123–143 (RNRRKRKGSDDDGGDSPVQDI) are disordered. An interaction with SIN3A region spans residues 130–220 (GSDDDGGDSP…SDLKVDSGVH (91 aa)). A phosphoserine mark is found at S131 and S138. T145 bears the Phosphothreonine mark. Residues K194, K205, and K214 each participate in a glycyl lysine isopeptide (Lys-Gly) (interchain with G-Cter in SUMO2) cross-link.

It belongs to the SAP30 family. Component of the histone deacetylase complex that includes at least SIN3A, HDAC1 and HDAC2. Found in a complex composed of at least SINHCAF, SIN3A, HDAC1, SAP30, RBBP4, OGT and TET1. Interacts with HDAC1. Interacts with SIN3A, SIN3B, HDAC2, RBBP4 and NCOR1. Interacts with SAMSN1. Interacts with HCFC1. Interacts with SAP30BP. Expressed in all tissues tested with highest levels in pancreas, ovary, PBL, spleen and thymus; lowest levels in brain, placenta, lung and kidney.

It localises to the nucleus. In terms of biological role, involved in the functional recruitment of the Sin3-histone deacetylase complex (HDAC) to a specific subset of N-CoR corepressor complexes. Capable of transcription repression by N-CoR. Active in deacetylating core histone octamers (when in a complex) but inactive in deacetylating nucleosomal histones. (Microbial infection) Involved in transcriptional repression of HHV-1 genes TK and gC. The polypeptide is Histone deacetylase complex subunit SAP30 (Homo sapiens (Human)).